Here is a 281-residue protein sequence, read N- to C-terminus: Aldo-keto reductase MAP_3007 (281 aa).

Residue Tyr-56 is the Proton donor of the active site. The NADPH site is built by Leu-196, Ile-234, Arg-236, Ser-237, Ala-238, Ser-245, and Arg-272.

It belongs to the aldo/keto reductase family.

The sequence is that of Aldo-keto reductase MAP_3007 from Mycolicibacterium paratuberculosis (strain ATCC BAA-968 / K-10) (Mycobacterium paratuberculosis).